A 100-amino-acid chain; its full sequence is Small ribosomal subunit protein uS14 (100 aa).

This sequence belongs to the universal ribosomal protein uS14 family. In terms of assembly, part of the 30S ribosomal subunit. Contacts proteins S3 and S10.

Functionally, binds 16S rRNA, required for the assembly of 30S particles and may also be responsible for determining the conformation of the 16S rRNA at the A site. The polypeptide is Small ribosomal subunit protein uS14 (Prochlorococcus marinus (strain AS9601)).